The sequence spans 66 residues: Small ribosomal subunit protein bS21B (66 aa).

The segment at 38 to 66 is disordered; it reads YVKPTQKRKIAKKAAISKAKKEARRSYSY.

This sequence belongs to the bacterial ribosomal protein bS21 family.

The chain is Small ribosomal subunit protein bS21B from Francisella tularensis subsp. tularensis (strain SCHU S4 / Schu 4).